We begin with the raw amino-acid sequence, 566 residues long: Serine/threonine-protein kinase PknE (566 aa).

Topologically, residues 1 to 337 are cytoplasmic; that stretch reads MDGTAESREG…PLPRSARQPW (337 aa). Serine 7 bears the Phosphoserine; by autocatalysis mark. Phosphothreonine; by autocatalysis is present on threonine 11. In terms of domain architecture, Protein kinase spans 16-275; it reads YRLRRLVGRG…DLSAAAHAAL (260 aa). Residues 22–30 and lysine 45 each bind ATP; that span reads VGRGGMGDV. Threonine 50 and threonine 59 each carry phosphothreonine; by autocatalysis. The active-site Proton acceptor is the aspartate 139. Phosphothreonine; by autocatalysis occurs at positions 170, 175, and 178. The segment at 296–330 is disordered; sequence PVPSTHPVSPGTRWPQPTPWAGGAPPWGPPSSPLP. A helical transmembrane segment spans residues 338-358; that stretch reads LWVGVAVAVVVALAGGLGIAL. Residues 359 to 566 lie on the Extracellular side of the membrane; the sequence is AHPWRSSGPR…DPSWLARLIG (208 aa).

This sequence belongs to the protein kinase superfamily. Ser/Thr protein kinase family. Autophosphorylated on serine and threonine residues. Dephosphorylated by PstP.

The protein resides in the cell membrane. It carries out the reaction L-seryl-[protein] + ATP = O-phospho-L-seryl-[protein] + ADP + H(+). The catalysed reaction is L-threonyl-[protein] + ATP = O-phospho-L-threonyl-[protein] + ADP + H(+). This Mycobacterium bovis (strain ATCC BAA-935 / AF2122/97) protein is Serine/threonine-protein kinase PknE (pknE).